The following is a 353-amino-acid chain: Photosystem II D2 protein (353 aa).

At Thr2 the chain carries N-acetylthreonine. Thr2 carries the post-translational modification Phosphothreonine. A helical membrane pass occupies residues 41 to 61 (CAYFALGGWFTGTTFVTSWYT). Residue His118 coordinates chlorophyll a. Residues 125-141 (GFMLRQFELARSVQLRP) form a helical membrane-spanning segment. Pheophytin a is bound by residues Gln130 and Asn143. A helical membrane pass occupies residues 153–166 (VFVSVFLIYPLGQS). Residue His198 participates in chlorophyll a binding. The chain crosses the membrane as a helical span at residues 208-228 (AALLCAIHGATVENTLFEDGD). Positions 215 and 262 each coordinate a plastoquinone. Residue His215 coordinates Fe cation. His269 provides a ligand contact to Fe cation. Residues 279 to 295 (GLWMSALGVVGLALNLR) traverse the membrane as a helical segment.

The protein belongs to the reaction center PufL/M/PsbA/D family. As to quaternary structure, PSII is composed of 1 copy each of membrane proteins PsbA, PsbB, PsbC, PsbD, PsbE, PsbF, PsbH, PsbI, PsbJ, PsbK, PsbL, PsbM, PsbT, PsbX, PsbY, PsbZ, Psb30/Ycf12, at least 3 peripheral proteins of the oxygen-evolving complex and a large number of cofactors. It forms dimeric complexes. The D1/D2 heterodimer binds P680, chlorophylls that are the primary electron donor of PSII, and subsequent electron acceptors. It shares a non-heme iron and each subunit binds pheophytin, quinone, additional chlorophylls, carotenoids and lipids. There is also a Cl(-1) ion associated with D1 and D2, which is required for oxygen evolution. The PSII complex binds additional chlorophylls, carotenoids and specific lipids. is required as a cofactor.

The protein localises to the plastid. It localises to the chloroplast thylakoid membrane. It carries out the reaction 2 a plastoquinone + 4 hnu + 2 H2O = 2 a plastoquinol + O2. In terms of biological role, photosystem II (PSII) is a light-driven water:plastoquinone oxidoreductase that uses light energy to abstract electrons from H(2)O, generating O(2) and a proton gradient subsequently used for ATP formation. It consists of a core antenna complex that captures photons, and an electron transfer chain that converts photonic excitation into a charge separation. The D1/D2 (PsbA/PsbD) reaction center heterodimer binds P680, the primary electron donor of PSII as well as several subsequent electron acceptors. D2 is needed for assembly of a stable PSII complex. The sequence is that of Photosystem II D2 protein from Phaseolus vulgaris (Kidney bean).